We begin with the raw amino-acid sequence, 114 residues long: Probable acid stress chaperone HdeA (114 aa).

The first 26 residues, 1–26 (MIKTLFNKNTALAAVAILALSGSAMA), serve as a signal peptide directing secretion. Cys-46 and Cys-94 are disulfide-bonded.

Belongs to the HdeA family.

Its subcellular location is the periplasm. In terms of biological role, required for optimal acid stress protection. Exhibits a chaperone-like activity only at low pH by suppressing non-specifically the aggregation of denaturated periplasmic proteins. The polypeptide is Probable acid stress chaperone HdeA (Brucella ovis (strain ATCC 25840 / 63/290 / NCTC 10512)).